The sequence spans 198 residues: 3-isopropylmalate dehydratase small subunit (198 aa).

It belongs to the LeuD family. LeuD type 1 subfamily. In terms of assembly, heterodimer of LeuC and LeuD.

The catalysed reaction is (2R,3S)-3-isopropylmalate = (2S)-2-isopropylmalate. Its pathway is amino-acid biosynthesis; L-leucine biosynthesis; L-leucine from 3-methyl-2-oxobutanoate: step 2/4. Its function is as follows. Catalyzes the isomerization between 2-isopropylmalate and 3-isopropylmalate, via the formation of 2-isopropylmaleate. This chain is 3-isopropylmalate dehydratase small subunit, found in Mycolicibacterium paratuberculosis (strain ATCC BAA-968 / K-10) (Mycobacterium paratuberculosis).